Consider the following 99-residue polypeptide: Large ribosomal subunit protein uL23 (99 aa).

The protein belongs to the universal ribosomal protein uL23 family. Part of the 50S ribosomal subunit. Contacts protein L29, and trigger factor when it is bound to the ribosome.

One of the early assembly proteins it binds 23S rRNA. One of the proteins that surrounds the polypeptide exit tunnel on the outside of the ribosome. Forms the main docking site for trigger factor binding to the ribosome. This is Large ribosomal subunit protein uL23 from Hydrogenobaculum sp. (strain Y04AAS1).